Consider the following 487-residue polypeptide: Acetyl-coenzyme A carboxylase carboxyl transferase subunit beta, chloroplastic (487 aa).

The 265-residue stretch at 223-487 (LWVQCENCYG…LHAFFPLNQN (265 aa)) folds into the CoA carboxyltransferase N-terminal domain. Zn(2+)-binding residues include C227, C230, C246, and C249. A C4-type zinc finger spans residues 227–249 (CENCYGLNYKKSFKSKMNLCEQC).

The protein belongs to the AccD/PCCB family. In terms of assembly, acetyl-CoA carboxylase is a heterohexamer composed of biotin carboxyl carrier protein, biotin carboxylase and 2 subunits each of ACCase subunit alpha and ACCase plastid-coded subunit beta (accD). Zn(2+) is required as a cofactor.

It is found in the plastid. It localises to the chloroplast stroma. It carries out the reaction N(6)-carboxybiotinyl-L-lysyl-[protein] + acetyl-CoA = N(6)-biotinyl-L-lysyl-[protein] + malonyl-CoA. The protein operates within lipid metabolism; malonyl-CoA biosynthesis; malonyl-CoA from acetyl-CoA: step 1/1. Functionally, component of the acetyl coenzyme A carboxylase (ACC) complex. Biotin carboxylase (BC) catalyzes the carboxylation of biotin on its carrier protein (BCCP) and then the CO(2) group is transferred by the transcarboxylase to acetyl-CoA to form malonyl-CoA. The sequence is that of Acetyl-coenzyme A carboxylase carboxyl transferase subunit beta, chloroplastic from Panax ginseng (Korean ginseng).